We begin with the raw amino-acid sequence, 565 residues long: DNA-directed RNA polymerase subunit beta C-terminal section (565 aa).

The protein belongs to the RNA polymerase beta chain family. In terms of assembly, in plastids the minimal PEP RNA polymerase catalytic core is composed of four subunits: alpha, beta, beta', and beta''. When a (nuclear-encoded) sigma factor is associated with the core the holoenzyme is formed, which can initiate transcription.

It localises to the plastid. The protein localises to the chloroplast. It catalyses the reaction RNA(n) + a ribonucleoside 5'-triphosphate = RNA(n+1) + diphosphate. In terms of biological role, DNA-dependent RNA polymerase catalyzes the transcription of DNA into RNA using the four ribonucleoside triphosphates as substrates. The protein is DNA-directed RNA polymerase subunit beta C-terminal section (rpoB2) of Tetradesmus obliquus (Green alga).